The chain runs to 179 residues: Cytochrome b6-f complex iron-sulfur subunit (179 aa).

The chain crosses the membrane as a helical span at residues 21-43; sequence LLTFGTVTGVALGALYPVVNYFI. The region spanning 61-162 is the Rieske domain; it reads GNDVSVTKFL…TNVSDDKIVL (102 aa). [2Fe-2S] cluster contacts are provided by C108, H110, C126, and H129. C113 and C128 form a disulfide bridge.

This sequence belongs to the Rieske iron-sulfur protein family. As to quaternary structure, the 4 large subunits of the cytochrome b6-f complex are cytochrome b6, subunit IV (17 kDa polypeptide, PetD), cytochrome f and the Rieske protein, while the 4 small subunits are PetG, PetL, PetM and PetN. The complex functions as a dimer. The cofactor is [2Fe-2S] cluster.

The protein localises to the cellular thylakoid membrane. It carries out the reaction 2 oxidized [plastocyanin] + a plastoquinol + 2 H(+)(in) = 2 reduced [plastocyanin] + a plastoquinone + 4 H(+)(out). Functionally, component of the cytochrome b6-f complex, which mediates electron transfer between photosystem II (PSII) and photosystem I (PSI), cyclic electron flow around PSI, and state transitions. The chain is Cytochrome b6-f complex iron-sulfur subunit from Nostoc punctiforme (strain ATCC 29133 / PCC 73102).